The chain runs to 357 residues: DNA replication and repair protein RecF (357 aa).

30–37 (GANGSGKT) contacts ATP.

It belongs to the RecF family.

Its subcellular location is the cytoplasm. The RecF protein is involved in DNA metabolism; it is required for DNA replication and normal SOS inducibility. RecF binds preferentially to single-stranded, linear DNA. It also seems to bind ATP. The chain is DNA replication and repair protein RecF from Salmonella schwarzengrund (strain CVM19633).